Reading from the N-terminus, the 110-residue chain is Phosphoribosyl-ATP pyrophosphatase (110 aa).

It belongs to the PRA-PH family.

Its subcellular location is the cytoplasm. The catalysed reaction is 1-(5-phospho-beta-D-ribosyl)-ATP + H2O = 1-(5-phospho-beta-D-ribosyl)-5'-AMP + diphosphate + H(+). The protein operates within amino-acid biosynthesis; L-histidine biosynthesis; L-histidine from 5-phospho-alpha-D-ribose 1-diphosphate: step 2/9. The chain is Phosphoribosyl-ATP pyrophosphatase from Pseudomonas savastanoi pv. phaseolicola (strain 1448A / Race 6) (Pseudomonas syringae pv. phaseolicola (strain 1448A / Race 6)).